We begin with the raw amino-acid sequence, 126 residues long: Fluoride-specific ion channel FluC (126 aa).

Transmembrane regions (helical) follow at residues 4–24 (PLLS…LLGL), 33–53 (IPLG…FAMA), 67–87 (FVIT…IEIV), and 97–117 (MAML…CLGL). Na(+) contacts are provided by G74 and T77.

It belongs to the fluoride channel Fluc/FEX (TC 1.A.43) family.

It localises to the cell inner membrane. It carries out the reaction fluoride(in) = fluoride(out). Na(+) is not transported, but it plays an essential structural role and its presence is essential for fluoride channel function. Its function is as follows. Fluoride-specific ion channel. Important for reducing fluoride concentration in the cell, thus reducing its toxicity. This Acinetobacter baumannii (strain ACICU) protein is Fluoride-specific ion channel FluC.